A 311-amino-acid polypeptide reads, in one-letter code: Mediator of RNA polymerase II transcription subunit 27 (311 aa).

S132 is subject to Phosphoserine. K134 carries the N6-methyllysine modification.

The protein belongs to the Mediator complex subunit 27 family. Component of the Mediator complex, which is composed of MED1, MED4, MED6, MED7, MED8, MED9, MED10, MED11, MED12, MED13, MED13L, MED14, MED15, MED16, MED17, MED18, MED19, MED20, MED21, MED22, MED23, MED24, MED25, MED26, MED27, MED29, MED30, MED31, CCNC, CDK8 and CDC2L6/CDK11. The MED12, MED13, CCNC and CDK8 subunits form a distinct module termed the CDK8 module. Mediator containing the CDK8 module is less active than Mediator lacking this module in supporting transcriptional activation. Individual preparations of the Mediator complex lacking one or more distinct subunits have been variously termed ARC, CRSP, DRIP, PC2, SMCC and TRAP.

The protein resides in the nucleus. Component of the Mediator complex, a coactivator involved in the regulated transcription of nearly all RNA polymerase II-dependent genes. Mediator functions as a bridge to convey information from gene-specific regulatory proteins to the basal RNA polymerase II transcription machinery. Mediator is recruited to promoters by direct interactions with regulatory proteins and serves as a scaffold for the assembly of a functional preinitiation complex with RNA polymerase II and the general transcription factors. In Mus musculus (Mouse), this protein is Mediator of RNA polymerase II transcription subunit 27 (Med27).